The primary structure comprises 477 residues: 3-sulfolactaldehyde dehydrogenase (477 aa).

Position 232–233 (232–233) interacts with NAD(+); that stretch reads GS. The Proton acceptor role is filled by Glu252. Leu253 contacts NAD(+). Catalysis depends on Cys286, which acts as the Nucleophile. Glu380 lines the NAD(+) pocket.

It belongs to the aldehyde dehydrogenase family.

The catalysed reaction is (2S)-3-sulfolactaldehyde + NAD(+) + H2O = (2S)-3-sulfolactate + NADH + 2 H(+). In terms of biological role, part of the sulfo-TAL (or sulfo-SFT) pathway, a D-sulfoquinovose degradation pathway that produces sulfolactate (SL). Catalyzes the oxidation of 3-sulfolactaldehyde (SLA) to sulfolactate (SL). This chain is 3-sulfolactaldehyde dehydrogenase, found in Priestia aryabhattai (Bacillus aryabhattai).